The primary structure comprises 336 residues: NADH-quinone oxidoreductase subunit H (336 aa).

8 helical membrane passes run Trp-17–Ile-37, Ala-85–Met-105, Leu-116–Thr-136, Ala-154–Leu-174, Val-190–Glu-210, Val-247–Ile-267, Ile-274–Ile-294, and Phe-309–Val-329.

It belongs to the complex I subunit 1 family. As to quaternary structure, NDH-1 is composed of 14 different subunits. Subunits NuoA, H, J, K, L, M, N constitute the membrane sector of the complex.

The protein resides in the cell membrane. It carries out the reaction a quinone + NADH + 5 H(+)(in) = a quinol + NAD(+) + 4 H(+)(out). In terms of biological role, NDH-1 shuttles electrons from NADH, via FMN and iron-sulfur (Fe-S) centers, to quinones in the respiratory chain. The immediate electron acceptor for the enzyme in this species is believed to be ubiquinone. Couples the redox reaction to proton translocation (for every two electrons transferred, four hydrogen ions are translocated across the cytoplasmic membrane), and thus conserves the redox energy in a proton gradient. This subunit may bind ubiquinone. This chain is NADH-quinone oxidoreductase subunit H, found in Brevibacillus brevis (strain 47 / JCM 6285 / NBRC 100599).